The primary structure comprises 700 residues: Elongation factor G 2 (700 aa).

Residues 8-290 (ERYRNIGISA…AVLDFLPSPI (283 aa)) form the tr-type G domain. GTP is bound by residues 17–24 (AHIDAGKT), 88–92 (DTPGH), and 142–145 (NKMD).

This sequence belongs to the TRAFAC class translation factor GTPase superfamily. Classic translation factor GTPase family. EF-G/EF-2 subfamily.

Its subcellular location is the cytoplasm. Functionally, catalyzes the GTP-dependent ribosomal translocation step during translation elongation. During this step, the ribosome changes from the pre-translocational (PRE) to the post-translocational (POST) state as the newly formed A-site-bound peptidyl-tRNA and P-site-bound deacylated tRNA move to the P and E sites, respectively. Catalyzes the coordinated movement of the two tRNA molecules, the mRNA and conformational changes in the ribosome. This chain is Elongation factor G 2, found in Paraburkholderia xenovorans (strain LB400).